We begin with the raw amino-acid sequence, 293 residues long: Cell division protein FtsQ (293 aa).

At 1 to 27 (MRPLMRNRASERGVDPAPSRWAWRMQR) the chain is on the cytoplasmic side. Residues 28 to 48 (LLLTPAFLLFLRAGVPVLVLF) traverse the membrane as a helical segment. Topologically, residues 49–293 (GAATWWLSDT…WWEIRQVSRQ (245 aa)) are periplasmic. In terms of domain architecture, POTRA spans 81 to 149 (FMVQLMAVDG…GVLHIDVEPR (69 aa)).

The protein belongs to the FtsQ/DivIB family. FtsQ subfamily.

Its subcellular location is the cell inner membrane. Essential cell division protein. In Roseobacter litoralis (strain ATCC 49566 / DSM 6996 / JCM 21268 / NBRC 15278 / OCh 149), this protein is Cell division protein FtsQ.